The sequence spans 432 residues: Protein distal antenna-related (432 aa).

An HTH psq-type domain is found at 15-66; the sequence is TRGKRPLRNLTPNDKVRAIQRIHNGETKASVSRDLGVPESTLRGWCKNEQKL. The segment at residues 42–62 is a DNA-binding region (H-T-H motif); sequence KASVSRDLGVPESTLRGWCKN. Disordered regions lie at residues 195–221 and 401–432; these read ESAD…NSTK and SCAS…DGEQ. 2 stretches are compositionally biased toward polar residues: residues 202–211 and 401–425; these read KSPQSTTDIT and SCAS…TSIA.

Interacts with itself, dan, ey and dac to form a complex (or complexes) containing the RD factors.

Its subcellular location is the nucleus. In terms of biological role, probable transcription factor with a role in the retinal determination (RD) network. Regulates ato expression and is required for normal R8 induction and differentiation. Danr appears to repress Dan expression, but Dan is required for Danr expression anterior to the morphogenetic furrow (MF). Dan and Danr lie downstream of so and require dac function for highest levels of expression. Contributes to differentiation of antenna-specific characteristics; effector gene that acts downstream of homothorax (hth), Distal-less (Dll), cut (ct) and spineless (ss) genes to control differentiation of distal antennal structures. This is Protein distal antenna-related from Drosophila pseudoobscura pseudoobscura (Fruit fly).